The chain runs to 502 residues: MPLVKRNIEPRHLCRGALPEGITSELECVTNSTLAAIIRQLSSLSKHAEDIFGELFNEANNFYIRANSLQDRIDRLAVKVTQLDSTVEEVSLQDINMKKAFKSSTVQDQQVVSKNSIPNPVADIYNQSDKPPPLNILTPYRDDKKDGLKFYTDPSYFFDLWKEKMLQDTEDKRKEKRRQKEQKRIDGTTREVKKVRKARNRRQEWNMMAYDKELRPDNRLSQSVYHGASSEGSLSPDTRSHASDVTDYSYPATPNHSLHPQPVTPSYAAGDVPPHGPASQAAEHEYRPPSASARHMALNRPQQPPPPPPPQAPEGSQASAPMAPADYGMLPAQIIEYYNPSGPPPPPPPPVIPSAQTAFVSPLQMPMQPPFPASASSTHAAPPHPPSTGLLVTAPPPPGPPPPPPGPPGPGSSLSSSPMHGPPVAEAKRQEPAQPPISDARSDLLAAIRMGIQLKKVQEQREQEAKREPVGNDVATILSRRIAVEYSDSDDDSEFDENDWSD.

The stretch at 57–93 (NEANNFYIRANSLQDRIDRLAVKVTQLDSTVEEVSLQ) forms a coiled coil. Tyrosine 151 bears the Phosphotyrosine; by ABL1 mark. A coiled-coil region spans residues 162 to 206 (KEKMLQDTEDKRKEKRRQKEQKRIDGTTREVKKVRKARNRRQEWN). 2 disordered regions span residues 169–210 (TEDK…MMAY) and 223–443 (SVYH…ARSD). Residues 182–192 (QKRIDGTTREV) show a composition bias toward basic and acidic residues. The span at 223–237 (SVYHGASSEGSLSPD) shows a compositional bias: polar residues. The residue at position 248 (tyrosine 248) is a Phosphotyrosine; by ABL1. A compositionally biased stretch (pro residues) spans 302 to 312 (QQPPPPPPPQA). Tyrosine 337 bears the Phosphotyrosine; by ABL1 mark. Pro residues-rich tracts occupy residues 341-352 (SGPPPPPPPPVI) and 394-410 (APPPPGPPPPPPGPPGP). A compositionally biased stretch (low complexity) spans 411–423 (GSSLSSSPMHGPP). Residues 440-457 (ARSDLLAAIRMGIQLKKV) form the WH2 domain. Tyrosine 486 bears the Phosphotyrosine; by ABL1 mark.

Belongs to the SCAR/WAVE family. In terms of assembly, binds actin and the Arp2/3 complex. Phosphorylation by ABL1 promotes lamellipodia formation and cell migration. In terms of tissue distribution, expressed in ovary and brain.

The protein resides in the cytoplasm. It localises to the cytoskeleton. In terms of biological role, downstream effector molecules involved in the transmission of signals from tyrosine kinase receptors and small GTPases to the actin cytoskeleton. Plays a role in the regulation of cell morphology and cytoskeletal organization. Required in the control of cell shape. This chain is Actin-binding protein WASF3 (WASF3), found in Homo sapiens (Human).